The primary structure comprises 981 residues: Proline-rich transmembrane protein 3 (981 aa).

The N-terminal stretch at 1-27 is a signal peptide; it reads MASSPWGCVCGLLLLLLPLLGTGPALG. Residues 28-474 lie on the Extracellular side of the membrane; sequence RGFPRPLENS…RVLSFSWELH (447 aa). Disordered stretches follow at residues 43-107 and 169-457; these read PGAH…GAQR and PPSL…TAPP. Over residues 65–85 the composition is skewed to basic and acidic residues; it reads PRADSHRNSDVRHAPAEEMPE. An O-glycosylated at one site region spans residues 297–302; the sequence is SWEVSS. Ser-329 carries an O-linked (GalNAc...) serine glycan. Basic and acidic residues predominate over residues 331–340; it reads APDRPSKPER. Residue Thr-363 is glycosylated (O-linked (GalNAc...) threonine). Asn-379 is a glycosylation site (N-linked (GlcNAc...) asparagine). The segment covering 411-427 has biased composition (polar residues); that stretch reads APSTSRRGLIRVTTQRA. Residues 437-457 show a composition bias toward low complexity; sequence TASSMASAPASSPPANATAPP. A helical transmembrane segment spans residues 475–495; that stretch reads VYGVGVLFLLPALLALAALAA. The Cytoplasmic portion of the chain corresponds to 496–501; that stretch reads APAGPR. A helical membrane pass occupies residues 502–522; the sequence is LALVAAVLVLVASALRSAYML. Residues 523–542 lie on the Extracellular side of the membrane; the sequence is TDPYGSQARLGVRGGLVLYN. Residues 543 to 563 traverse the membrane as a helical segment; it reads LPFPLLLTALAALTLLGLGAG. Residues 564–570 lie on the Cytoplasmic side of the membrane; sequence LPPPLQN. A helical membrane pass occupies residues 571–591; that stretch reads PLLLGAVALVHGVGLLATDLL. Topologically, residues 592-598 are extracellular; sequence STWSVLN. The helical transmembrane segment at 599 to 619 threads the bilayer; sequence LLTQGLSCAWGAAVALGTLCL. Over 620 to 638 the chain is Cytoplasmic; that stretch reads CRRRLLDGPRGWDASPGPR. Residues 639–659 traverse the membrane as a helical segment; it reads LLAVAGALGLLASGLQLAAAL. Over 660–679 the chain is Extracellular; it reads WLYPGPGRVGRFSWAWWGVH. Residues 680–700 traverse the membrane as a helical segment; it reads FWLRLLELTWALALALAAVAA. Topologically, residues 701 to 981 are cytoplasmic; it reads ARPRPPTEHA…RSASSDTIEL (281 aa). Residues 759–807 are disordered; that stretch reads AESGQLATPSSGAWGSAASLGRGPQGGPGLSRNGVGPAPSLSELDLRPP. The segment covering 765 to 780 has biased composition (low complexity); it reads ATPSSGAWGSAASLGR. Residue Ser-777 is modified to Phosphoserine. An Omega-N-methylarginine modification is found at Arg-780. 9 positions are modified to phosphoserine: Ser-789, Ser-798, Ser-808, Ser-815, Ser-854, Ser-874, Ser-902, Ser-903, and Ser-911. A disordered region spans residues 836-865; it reads LRGLASPPPGGALRPRRGSHPKAELDDAGS. Positions 937–981 are disordered; sequence TVQLLPAPTPAPDSTAARQGDGQGEVQPRGKPGESRSASSDTIEL. A compositionally biased stretch (polar residues) spans 972–981; the sequence is RSASSDTIEL.

It is found in the membrane. The protein is Proline-rich transmembrane protein 3 (PRRT3) of Homo sapiens (Human).